We begin with the raw amino-acid sequence, 229 residues long: 23 kDa piroplasm membrane protein (229 aa).

The signal sequence occupies residues 1-19 (MNKYFKVFFFVLLTHALKS). The Extracellular segment spans residues 20-203 (SLIFGQATLQ…EKEETSKKKY (184 aa)). Residues 204-224 (VLMVVVVVVFVVVASLVVFLV) form a helical membrane-spanning segment. Residues 225–229 (KFCLK) are Cytoplasmic-facing.

Its subcellular location is the membrane. The chain is 23 kDa piroplasm membrane protein from Theileria annulata.